Reading from the N-terminus, the 428-residue chain is tRNA modification GTPase MnmE (428 aa).

The (6S)-5-formyl-5,6,7,8-tetrahydrofolate site is built by R20, E76, and R116. The TrmE-type G domain maps to 212-351; the sequence is GFEVAIVGAP…LVAAIGERLL (140 aa). Position 222 (N222) interacts with K(+). Residues 222-227, 241-247, and 266-269 contribute to the GTP site; these read NAGKST, SEIAGTT, and DTAG. S226 serves as a coordination point for Mg(2+). K(+)-binding residues include S241, I243, and T246. Residue T247 coordinates Mg(2+). K428 lines the (6S)-5-formyl-5,6,7,8-tetrahydrofolate pocket.

This sequence belongs to the TRAFAC class TrmE-Era-EngA-EngB-Septin-like GTPase superfamily. TrmE GTPase family. Homodimer. Heterotetramer of two MnmE and two MnmG subunits. Requires K(+) as cofactor.

The protein localises to the cytoplasm. Exhibits a very high intrinsic GTPase hydrolysis rate. Involved in the addition of a carboxymethylaminomethyl (cmnm) group at the wobble position (U34) of certain tRNAs, forming tRNA-cmnm(5)s(2)U34. The protein is tRNA modification GTPase MnmE of Cereibacter sphaeroides (strain ATCC 17029 / ATH 2.4.9) (Rhodobacter sphaeroides).